A 64-amino-acid polypeptide reads, in one-letter code: U-scoloptoxin(14)-Er1a (64 aa).

Positions 1 to 23 (MRPSFPLLLIMLLVCTAHHMVSG) are cleaved as a signal peptide.

It belongs to the scoloptoxin-14 family. In terms of processing, contains 4 disulfide bonds. As to expression, expressed by the venom gland.

It is found in the secreted. The sequence is that of U-scoloptoxin(14)-Er1a from Ethmostigmus rubripes (Giant centipede).